Reading from the N-terminus, the 431-residue chain is UDP-N-acetylglucosamine 1-carboxyvinyltransferase (431 aa).

22–23 (KN) contacts phosphoenolpyruvate. R92 serves as a coordination point for UDP-N-acetyl-alpha-D-glucosamine. The active-site Proton donor is the D116. UDP-N-acetyl-alpha-D-glucosamine is bound by residues 121–125 (RPIDQ), D307, and I330.

The protein belongs to the EPSP synthase family. MurA subfamily.

The protein resides in the cytoplasm. It catalyses the reaction phosphoenolpyruvate + UDP-N-acetyl-alpha-D-glucosamine = UDP-N-acetyl-3-O-(1-carboxyvinyl)-alpha-D-glucosamine + phosphate. It functions in the pathway cell wall biogenesis; peptidoglycan biosynthesis. In terms of biological role, cell wall formation. Adds enolpyruvyl to UDP-N-acetylglucosamine. The sequence is that of UDP-N-acetylglucosamine 1-carboxyvinyltransferase from Lactobacillus acidophilus (strain ATCC 700396 / NCK56 / N2 / NCFM).